The sequence spans 121 residues: Fluoride-specific ion channel FluC 1 (121 aa).

Helical transmembrane passes span 3-23, 35-55, 64-84, and 92-112; these read YVYI…ISFL, VANL…IAFF, AITT…LELI, and FITL…LCYV. G71 and T74 together coordinate Na(+).

Belongs to the fluoride channel Fluc/FEX (TC 1.A.43) family.

The protein localises to the cell membrane. The enzyme catalyses fluoride(in) = fluoride(out). With respect to regulation, na(+) is not transported, but it plays an essential structural role and its presence is essential for fluoride channel function. Its function is as follows. Fluoride-specific ion channel. Important for reducing fluoride concentration in the cell, thus reducing its toxicity. The polypeptide is Fluoride-specific ion channel FluC 1 (Staphylococcus aureus (strain bovine RF122 / ET3-1)).